Reading from the N-terminus, the 520-residue chain is Ribonuclease Y (520 aa).

The chain crosses the membrane as a helical span at residues 3–23 (IEIQWIGIGAAFLVGAIGGAL). Residues 210–273 (AVSVVPLPND…EVARLALERL (64 aa)) form the KH domain. In terms of domain architecture, HD spans 336–429 (VLQHSIEVAF…VQAADALSGA (94 aa)).

Belongs to the RNase Y family.

Its subcellular location is the cell membrane. In terms of biological role, endoribonuclease that initiates mRNA decay. This Syntrophotalea carbinolica (strain DSM 2380 / NBRC 103641 / GraBd1) (Pelobacter carbinolicus) protein is Ribonuclease Y.